The chain runs to 614 residues: Probable Xaa-Pro aminopeptidase P (614 aa).

Positions 411, 422, 520, and 534 each coordinate Mn(2+).

This sequence belongs to the peptidase M24B family. The cofactor is Mn(2+).

The enzyme catalyses Release of any N-terminal amino acid, including proline, that is linked to proline, even from a dipeptide or tripeptide.. Catalyzes the removal of a penultimate prolyl residue from the N-termini of peptides. The chain is Probable Xaa-Pro aminopeptidase P (AMPP) from Sordaria macrospora (strain ATCC MYA-333 / DSM 997 / K(L3346) / K-hell).